Consider the following 230-residue polypeptide: uncharacterized protein (230 aa).

A divalent metal cation is bound by residues glutamate 74, glutamate 76, and aspartate 105.

The protein belongs to the FAH family.

This is an uncharacterized protein from Pyrococcus horikoshii (strain ATCC 700860 / DSM 12428 / JCM 9974 / NBRC 100139 / OT-3).